The primary structure comprises 412 residues: Phosphoglycerate kinase (412 aa).

Residues 24 to 26, Arg40, 63 to 66, Arg122, and Arg162 contribute to the substrate site; these read DLN and HLGR. ATP is bound by residues Lys212, Gly300, Glu331, and 360 to 363; that span reads GGDS.

The protein belongs to the phosphoglycerate kinase family. Monomer.

It is found in the cytoplasm. The enzyme catalyses (2R)-3-phosphoglycerate + ATP = (2R)-3-phospho-glyceroyl phosphate + ADP. The protein operates within carbohydrate degradation; glycolysis; pyruvate from D-glyceraldehyde 3-phosphate: step 2/5. This is Phosphoglycerate kinase (pgk) from Mycobacterium bovis (strain ATCC BAA-935 / AF2122/97).